A 479-amino-acid chain; its full sequence is Ammonium transporter Rh type C (479 aa).

The Cytoplasmic segment spans residues 1–9; that stretch reads MAWNTNLRW. A helical membrane pass occupies residues 10–30; the sequence is RLPLTCLLLQVIMVILFGVFV. Residues 31-60 lie on the Extracellular side of the membrane; that stretch reads RYDFEADAHWWSERTHKNLSDMENEFYYRY. N-linked (GlcNAc...) asparagine glycosylation occurs at N48. Residues 61-81 form a helical membrane-spanning segment; the sequence is PSFQDVHVMVFVGFGFLMTFL. The Cytoplasmic segment spans residues 82 to 85; it reads QRYG. A helical membrane pass occupies residues 86–106; sequence FSAVGFNFLLAAFGIQWALLM. Topologically, residues 107–123 are extracellular; the sequence is QGWFHFLQDRYIVVGVE. A helical membrane pass occupies residues 124-144; it reads NLINADFCVASVCVAFGAVLG. Residues 145 to 148 lie on the Cytoplasmic side of the membrane; sequence KVSP. A helical membrane pass occupies residues 149–169; sequence IQLLIMTFFQVTLFAVNEFIL. The Extracellular portion of the chain corresponds to 170–177; that stretch reads LNLLKVKD. Residues 178–200 traverse the membrane as a helical segment; the sequence is AGGSMTIHTFGAYFGLTVTRILY. Over 201–218 the chain is Cytoplasmic; the sequence is RRNLEQSKERQNSVYQSD. Residues 219 to 239 form a helical membrane-spanning segment; it reads LFAMIGTLFLWMYWPSFNSAI. The Extracellular portion of the chain corresponds to 240-250; sequence SYHGDSQHRAA. Residues 251–271 traverse the membrane as a helical segment; sequence INTYCSLAACVLTSVAISSAL. The Cytoplasmic segment spans residues 272-281; that stretch reads HKKGKLDMVH. The chain crosses the membrane as a helical span at residues 282 to 302; that stretch reads IQNATLAGGVAVGTAAEMMLM. Residue P303 is a topological domain, extracellular. The helical transmembrane segment at 304–324 threads the bilayer; the sequence is YGALIIGFVCGIISTLGFVYL. The Cytoplasmic portion of the chain corresponds to 325–345; it reads TPFLESRLHIQDTCGINNLHG. Residues 346-366 form a helical membrane-spanning segment; it reads IPGIIGGIVGAVTAASASLEV. The Extracellular segment spans residues 367 to 394; the sequence is YGKEGLVHSFDFQGFNGDWTARTQGKFQ. A helical transmembrane segment spans residues 395–415; that stretch reads IYGLLVTLAMALMGGIIVGLI. Residues 416–479 are Cytoplasmic-facing; sequence LRLPFWGQPS…PMASSVPLVP (64 aa).

Belongs to the ammonium transporter (TC 2.A.49) family. Rh subfamily. In terms of assembly, homotrimer. In terms of processing, N-glycosylated. As to expression, expressed in brain, testis, placenta, pancreas, esophagus and prostate. Expressed in squamous epithelial tissues (at protein level). Expressed in kidney.

It localises to the cell membrane. Its subcellular location is the apical cell membrane. It catalyses the reaction NH4(+)(in) = NH4(+)(out). It carries out the reaction methylamine(out) = methylamine(in). The enzyme catalyses CO2(out) = CO2(in). Its function is as follows. Ammonium transporter involved in the maintenance of acid-base homeostasis. Transports ammonium and its related derivative methylammonium across the plasma membrane of epithelial cells likely contributing to renal transepithelial ammonia transport and ammonia metabolism. Postulated to primarily mediate an electroneutral bidirectional transport of NH3 ammonia species according to a mechanism that implies interaction of an NH4(+) ion with acidic residues of the pore entry followed by dissociation of NH4(+) into NH3 and H(+). As a result NH3 transits through the central pore and is protonated on the extracellular side reforming NH4(+). May act as a CO2 channel providing for renal acid secretion. This chain is Ammonium transporter Rh type C (RHCG), found in Homo sapiens (Human).